The primary structure comprises 598 residues: Pentatricopeptide repeat-containing protein At5g14820, mitochondrial (598 aa).

A mitochondrion-targeting transit peptide spans 1 to 98 (MAAAPWLYLS…RGFSSGSSNV (98 aa)). 10 PPR repeats span residues 193–227 (DSRT…GLLT), 229–261 (ETFT…KFKI), 262–292 (GVET…LKER), 296–330 (NMMT…GLKP), 331–365 (DIVA…GPCP), 366–400 (NVRS…GLQP), 401–435 (DAAV…GHPP), 436–470 (DGKT…EIEP), 471–505 (SIHT…GICP), and 506–540 (DDNS…GMKT).

Belongs to the PPR family. P subfamily.

The protein resides in the mitochondrion. This Arabidopsis thaliana (Mouse-ear cress) protein is Pentatricopeptide repeat-containing protein At5g14820, mitochondrial.